A 550-amino-acid chain; its full sequence is Hydroxylamine reductase (550 aa).

Residues cysteine 7, cysteine 10, cysteine 19, and cysteine 25 each coordinate [4Fe-4S] cluster. Hybrid [4Fe-2O-2S] cluster-binding residues include histidine 244, glutamate 268, cysteine 312, cysteine 405, cysteine 433, cysteine 458, glutamate 493, and lysine 495. The residue at position 405 (cysteine 405) is a Cysteine persulfide.

It belongs to the HCP family. The cofactor is [4Fe-4S] cluster. Hybrid [4Fe-2O-2S] cluster serves as cofactor.

It is found in the cytoplasm. The enzyme catalyses A + NH4(+) + H2O = hydroxylamine + AH2 + H(+). Its function is as follows. Catalyzes the reduction of hydroxylamine to form NH(3) and H(2)O. The polypeptide is Hydroxylamine reductase (Porphyromonas gingivalis (strain ATCC 33277 / DSM 20709 / CIP 103683 / JCM 12257 / NCTC 11834 / 2561)).